The chain runs to 176 residues: Tubulin polymerization-promoting protein family member 3 (176 aa).

The residue at position 2 (A2) is an N-acetylalanine.

It belongs to the TPPP family.

The protein localises to the cytoplasm. It localises to the cytoskeleton. Functionally, regulator of microtubule dynamic that has microtubule bundling activity. Required for embryo implantation; possibly by regulating beta-catenin. Also required for decidualization via regulation of beta-catenin. The protein is Tubulin polymerization-promoting protein family member 3 (Tppp3) of Rattus norvegicus (Rat).